Reading from the N-terminus, the 92-residue chain is Large ribosomal subunit protein bL34m (92 aa).

The N-terminal 46 residues, 1 to 46 (MAVLAGSLLGPTSRSAALLGGRWLQPRAWLGFPDAWGLPTPQQARG), are a transit peptide targeting the mitochondrion. A Phosphoserine modification is found at Ser71.

It belongs to the bacterial ribosomal protein bL34 family. As to quaternary structure, component of the mitochondrial large ribosomal subunit (mt-LSU). Mature mammalian 55S mitochondrial ribosomes consist of a small (28S) and a large (39S) subunit. The 28S small subunit contains a 12S ribosomal RNA (12S mt-rRNA) and 30 different proteins. The 39S large subunit contains a 16S rRNA (16S mt-rRNA), a copy of mitochondrial valine transfer RNA (mt-tRNA(Val)), which plays an integral structural role, and 52 different proteins.

The protein resides in the mitochondrion. The polypeptide is Large ribosomal subunit protein bL34m (MRPL34) (Homo sapiens (Human)).